The sequence spans 896 residues: Echinoderm microtubule-associated protein-like 3 (896 aa).

M1 bears the N-acetylmethionine mark. Residues 16–43 adopt a coiled-coil conformation; it reads LQSLSQRLRVQEQEMELVKAALAEALRL. The segment at 50 to 209 is disordered; sequence PSSLQGSGTP…GGPGSRRSNY (160 aa). The span at 77-88 shows a compositional bias: polar residues; that stretch reads TPSLVSRGTQTE. Residues 134 to 145 are compositionally biased toward pro residues; sequence PGPPGILRPLQP. The segment covering 154 to 163 has biased composition (low complexity); that stretch reads RNSSSSSSPS. Residues 174–189 show a composition bias toward polar residues; the sequence is AISSANLLVRSGSTES. A phosphoserine mark is found at S176, S198, and S204. 13 WD repeats span residues 234–286, 295–344, 350–392, 398–434, 448–487, 504–543, 549–584, 589–626, 629–667, 674–709, 716–755, 765–823, and 830–869; these read RSLE…LYRP, GGGQ…IWDS, LQEI…VWDC, LAEI…FWNW, RKQG…TWGR, YGIV…QWGP, QEAE…LRGD, FSPV…LWDG, HALA…VLDT, SDVI…IYSV, SSRF…YWDV, RYES…LFQY, and APSR…QWRV. A disordered region spans residues 876–896; sequence GPAPATPSRTPSLSPASSLDV. Over residues 877 to 896 the composition is skewed to low complexity; that stretch reads PAPATPSRTPSLSPASSLDV. A Phosphothreonine; by CDK1 modification is found at T881. Residue S883 is modified to Phosphoserine.

This sequence belongs to the WD repeat EMAP family. As to quaternary structure, homotrimer; self-association is mediated by the N-terminal coiled coil. Interacts with EML2 but not with EML1. Interacts (phosphorylated at Thr-881) with TUBG1, HAUS1, HAUS2, HAUS3, HAUS4, HAUS5, HAUS6, HAUS7 and HAUS8. Phosphorylation at Thr-881 during mitosis is required for interaction with TUBG1, HAUS1, HAUS2, HAUS3, HAUS4, HAUS5, HAUS6, HAUS7 and HAUS8 and their recruitment to spindle microtubules.

The protein localises to the cytoplasm. It localises to the cytoskeleton. The protein resides in the nucleus. It is found in the midbody. Its subcellular location is the spindle. Regulates mitotic spindle assembly, microtubule (MT)-kinetochore attachment and chromosome separation via recruitment of HAUS augmin-like complex and TUBG1 to the existing MTs and promoting MT-based MT nucleation. Required for proper alignnment of chromosomes during metaphase. This is Echinoderm microtubule-associated protein-like 3 (EML3) from Homo sapiens (Human).